Reading from the N-terminus, the 281-residue chain is Arabinose operon regulatory protein (281 aa).

Proline 8, threonine 24, arginine 38, tyrosine 82, and histidine 93 together coordinate alpha-L-arabinopyanose. Residues 180–279 (RDACQYISDH…GASPSEFRAG (100 aa)) enclose the HTH araC/xylS-type domain. DNA-binding regions (H-T-H motif) lie at residues 198–219 (ASVAQHVCLSPSRLSHLFRQQL) and 246–269 (IATVGRNVGFDDQLYFSRVFKKCT).

In terms of assembly, homodimer.

The protein localises to the cytoplasm. Transcription factor that regulates the expression of several genes involved in the transport and metabolism of L-arabinose. In Salmonella typhimurium (strain LT2 / SGSC1412 / ATCC 700720), this protein is Arabinose operon regulatory protein.